The following is a 127-amino-acid chain: uncharacterized protein (127 aa).

Positions 1 to 17 are enriched in polar residues; it reads MQGSVQIQKGNISSSYT. The segment at 1–36 is disordered; that stretch reads MQGSVQIQKGNISSSYTPEKHPSHPTSANGSMSPKR.

This is an uncharacterized protein from Treponema pallidum (strain Nichols).